Consider the following 573-residue polypeptide: Potassium-transporting ATPase potassium-binding subunit (573 aa).

10 consecutive transmembrane segments (helical) span residues 6–26 (ILFA…GSYI), 66–86 (FFSL…ILLL), 135–155 (ALAV…IALI), 177–197 (VFWI…FQGV), 257–277 (IQMV…GKWV), 283–303 (GWLI…VMTI), 382–402 (IFGG…LAVF), 428–448 (MFAL…AAVI), 493–513 (ITIA…VIML), and 537–557 (FIFA…TIFP).

The protein belongs to the KdpA family. In terms of assembly, the system is composed of three essential subunits: KdpA, KdpB and KdpC.

The protein resides in the cell inner membrane. Part of the high-affinity ATP-driven potassium transport (or Kdp) system, which catalyzes the hydrolysis of ATP coupled with the electrogenic transport of potassium into the cytoplasm. This subunit binds the periplasmic potassium ions and delivers the ions to the membrane domain of KdpB through an intramembrane tunnel. This chain is Potassium-transporting ATPase potassium-binding subunit, found in Francisella tularensis subsp. tularensis (strain WY96-3418).